We begin with the raw amino-acid sequence, 318 residues long: Aspartate carbamoyltransferase catalytic subunit (318 aa).

Carbamoyl phosphate-binding residues include R62 and T63. An L-aspartate-binding site is contributed by K90. Carbamoyl phosphate contacts are provided by R112, H140, and Q143. Residues R173 and R227 each coordinate L-aspartate. 2 residues coordinate carbamoyl phosphate: G268 and P269.

Belongs to the aspartate/ornithine carbamoyltransferase superfamily. ATCase family. In terms of assembly, heterododecamer (2C3:3R2) of six catalytic PyrB chains organized as two trimers (C3), and six regulatory PyrI chains organized as three dimers (R2).

The catalysed reaction is carbamoyl phosphate + L-aspartate = N-carbamoyl-L-aspartate + phosphate + H(+). It participates in pyrimidine metabolism; UMP biosynthesis via de novo pathway; (S)-dihydroorotate from bicarbonate: step 2/3. Its function is as follows. Catalyzes the condensation of carbamoyl phosphate and aspartate to form carbamoyl aspartate and inorganic phosphate, the committed step in the de novo pyrimidine nucleotide biosynthesis pathway. The chain is Aspartate carbamoyltransferase catalytic subunit from Desulfotalea psychrophila (strain LSv54 / DSM 12343).